The chain runs to 284 residues: Malonyl-[acyl-carrier protein] O-methyltransferase (284 aa).

This sequence belongs to the methyltransferase superfamily.

It catalyses the reaction malonyl-[ACP] + S-adenosyl-L-methionine = malonyl-[ACP] methyl ester + S-adenosyl-L-homocysteine. The protein operates within cofactor biosynthesis; biotin biosynthesis. Functionally, converts the free carboxyl group of a malonyl-thioester to its methyl ester by transfer of a methyl group from S-adenosyl-L-methionine (SAM). It allows to synthesize pimeloyl-ACP via the fatty acid synthetic pathway. This chain is Malonyl-[acyl-carrier protein] O-methyltransferase, found in Legionella pneumophila subsp. pneumophila (strain Philadelphia 1 / ATCC 33152 / DSM 7513).